Reading from the N-terminus, the 68-residue chain is Copper transport protein ATOX1 (68 aa).

The HMA domain maps to 1–63 (MPKHEFSVDM…TLEKTGKAVS (63 aa)). Cu cation contacts are provided by C12 and C15. The residue at position 47 (S47) is a Phosphoserine. K60 carries the N6-acetyllysine modification.

It belongs to the ATX1 family. In terms of assembly, homodimer. Interacts with ATP7B. Interacts with ATP7A. Interacts (via dimer form) with SLC31A1 (via C-terminal domain); this interaction improves ATOX1 stability and controls intracellular Cu(I) levels.

Functionally, binds and deliver cytosolic copper to the copper ATPase proteins. May be important in cellular antioxidant defense. The protein is Copper transport protein ATOX1 of Canis lupus familiaris (Dog).